Here is a 567-residue protein sequence, read N- to C-terminus: MSSRLGAVPATPGPTPFKQQRSTRIVGAKNSRTQCSIKDNSFQYTIPHDDSLSGSSSASSCEPVSDFPASFRKSTYWMKMRRIKSAAASHVEGPGGVSTKGKRKPRQEEDEDYREFPQKKHKLYGRKQRPKAQPNPKAQTRRIRKEPPAYAAGSLEEQWYLEIVDKGSVSCPTCQAVGRKTIEGLKKHMENCKQEMFTCHHCGKQLRSLAGMKYHVMANHNSLPILKAGDEIDEPSERERLRTVLKRLGKLRCMRESCSSSFTSIMGYLYHVRKCGKGAAELEKMTLKCHHCGKPYRSKAGLAYHLRSEHGPISFFPESGQPECLKDMSLESKSGGRVQRRSAKIAVYHLQELASAELAKEWPKRKVLQDLVPDDRKLKYTRPGLPTFSQEVLHKWKSDIKKYHRIQCPNQGCEAVYSSVSGLKAHLGSCTLGTFVAGKYKCLLCQKEFVSESGVKYHINSVHAEDWFVVNPTTTKSFEKLMKIKQRQQEEEKRRQQHRSRRSLRRRQQPGIELPETEPSLRVGKDQRRNHEELLVATSRKEPEQEPVPTQFQKVRSPKTNHKRGKK.

The interval 1 to 34 (MSSRLGAVPATPGPTPFKQQRSTRIVGAKNSRTQ) is disordered. Glycyl lysine isopeptide (Lys-Gly) (interchain with G-Cter in SUMO2) cross-links involve residues K18 and K84. A disordered region spans residues 87 to 148 (AASHVEGPGG…QTRRIRKEPP (62 aa)). The segment covering 119–130 (KKHKLYGRKQRP) has biased composition (basic residues). The C2H2-type 1 zinc finger occupies 197–220 (FTCHHCGKQLRSLAGMKYHVMANH). K227 participates in a covalent cross-link: Glycyl lysine isopeptide (Lys-Gly) (interchain with G-Cter in SUMO2). The C2H2-type 2 zinc finger occupies 287–310 (LKCHHCGKPYRSKAGLAYHLRSEH). Residue K333 forms a Glycyl lysine isopeptide (Lys-Gly) (interchain with G-Cter in SUMO2) linkage. The segment at 406–430 (IQCPNQGCEAVYSSVSGLKAHLGSC) adopts a C2H2-type 3; atypical zinc-finger fold. The C2H2-type 3 zinc finger occupies 440 to 463 (YKCLLCQKEFVSESGVKYHINSVH). Residues 485-494 (KQRQQEEEKR) are compositionally biased toward basic and acidic residues. Positions 485–567 (KQRQQEEEKR…PKTNHKRGKK (83 aa)) are disordered. Positions 495–508 (RQQHRSRRSLRRRQ) are enriched in basic residues. The segment covering 523–544 (VGKDQRRNHEELLVATSRKEPE) has biased composition (basic and acidic residues). Positions 556 to 567 (RSPKTNHKRGKK) are enriched in basic residues.

This sequence belongs to the krueppel C2H2-type zinc-finger protein family.

It is found in the nucleus. Functionally, may be involved in transcriptional regulation. In Bos taurus (Bovine), this protein is Zinc finger protein 512 (ZNF512).